Here is a 203-residue protein sequence, read N- to C-terminus: Large ribosomal subunit protein bL25 (203 aa).

This sequence belongs to the bacterial ribosomal protein bL25 family. CTC subfamily. As to quaternary structure, part of the 50S ribosomal subunit; part of the 5S rRNA/L5/L18/L25 subcomplex. Contacts the 5S rRNA. Binds to the 5S rRNA independently of L5 and L18.

This is one of the proteins that binds to the 5S RNA in the ribosome where it forms part of the central protuberance. The chain is Large ribosomal subunit protein bL25 from Cereibacter sphaeroides (strain ATCC 17029 / ATH 2.4.9) (Rhodobacter sphaeroides).